Consider the following 399-residue polypeptide: Phosphoprotein (399 aa).

2 stretches are compositionally biased toward polar residues: residues 30–46 and 82–112; these read ATSQ…SSRT and GRQN…LPSP. A disordered region spans residues 30-112; that stretch reads ATSQSSLNKP…MGSDTQLPSP (83 aa). Positions 224–287 are multimerization; sequence NYASEILDAI…ITTMKIMDPG (64 aa). A coiled-coil region spans residues 226–253; the sequence is ASEILDAIKALEVRLDRIEGKVDKIMLT.

The protein belongs to the rubulavirus/avulavirus P protein family. As to quaternary structure, homotetramer. Interacts (via multimerization domain) with polymerase L; this interaction forms the polymerase L-P complex. Interacts (via N-terminus) with N0 (via Ncore); this interaction allows P to chaperon N0 to avoid N polymerization before encapsidation. Interacts (via C-terminus) with N-RNA template; this interaction positions the polymerase on the template for both transcription and replication.

Its function is as follows. Essential cofactor of the RNA polymerase L that plays a central role in the transcription and replication by forming the polymerase complex with RNA polymerase L and recruiting L to the genomic N-RNA template for RNA synthesis. Also plays a central role in the encapsidation of nascent RNA chains by forming the encapsidation complex with the nucleocapsid protein N (N-P complex). Acts as a chaperone for newly synthesized free N protein, so-called N0, allowing encapsidation of nascent RNA chains during replication. The nucleoprotein protein N prevents excessive phosphorylation of P, which leads to down-regulation of viral transcription/ replication. Participates, together with N, in the formation of viral factories (viroplasms), which are large inclusions in the host cytoplasm where replication takes place. This chain is Phosphoprotein (P/V), found in Human parainfluenza 4a virus (strain Toshiba) (HPIV-4a).